The sequence spans 125 residues: Small ribosomal subunit protein bS6 (125 aa).

It belongs to the bacterial ribosomal protein bS6 family.

In terms of biological role, binds together with bS18 to 16S ribosomal RNA. The chain is Small ribosomal subunit protein bS6 (rpsF) from Campylobacter jejuni subsp. jejuni serotype O:2 (strain ATCC 700819 / NCTC 11168).